The primary structure comprises 71 residues: NAD(P)H-quinone oxidoreductase subunit O (71 aa).

The protein belongs to the complex I NdhO subunit family. In terms of assembly, NDH-1 can be composed of about 15 different subunits; different subcomplexes with different compositions have been identified which probably have different functions.

Its subcellular location is the cellular thylakoid membrane. The enzyme catalyses a plastoquinone + NADH + (n+1) H(+)(in) = a plastoquinol + NAD(+) + n H(+)(out). The catalysed reaction is a plastoquinone + NADPH + (n+1) H(+)(in) = a plastoquinol + NADP(+) + n H(+)(out). Its function is as follows. NDH-1 shuttles electrons from an unknown electron donor, via FMN and iron-sulfur (Fe-S) centers, to quinones in the respiratory and/or the photosynthetic chain. The immediate electron acceptor for the enzyme in this species is believed to be plastoquinone. Couples the redox reaction to proton translocation, and thus conserves the redox energy in a proton gradient. Cyanobacterial NDH-1 also plays a role in inorganic carbon-concentration. The polypeptide is NAD(P)H-quinone oxidoreductase subunit O (Nostoc punctiforme (strain ATCC 29133 / PCC 73102)).